A 1195-amino-acid polypeptide reads, in one-letter code: Zinc finger and BTB domain-containing protein 38 (1195 aa).

A BTB domain is found at 33 to 100; sequence CDVTIIVEDT…IYSSTVVVKR (68 aa). Residue lysine 43 forms a Glycyl lysine isopeptide (Lys-Gly) (interchain with G-Cter in SUMO2) linkage. At serine 130 the chain carries Phosphoserine. Residues lysine 145, lysine 148, lysine 151, and lysine 259 each participate in a glycyl lysine isopeptide (Lys-Gly) (interchain with G-Cter in SUMO2) cross-link. A disordered region spans residues 264–334; it reads RKPKTFSIPQ…QSSDVPGPPA (71 aa). Polar residues predominate over residues 270–280; the sequence is SIPQDSDSATE. The interval 300–523 is interaction with CBFA2T3; that stretch reads PAAVLTRSKS…RRYQCIFCLE (224 aa). The residue at position 309 (serine 309) is a Phosphoserine. Over residues 314-323 the composition is skewed to basic and acidic residues; it reads GDVHFSREDE. Residues 342–364 form a C2H2-type 1 zinc finger; sequence YNCSCCSKAFDSSTLLSAHMQLH. The segment at 371–395 adopts a C2H2-type 2; degenerate zinc-finger fold; that stretch reads LVCKYCNKQFTTLNRLDRHEQICMR. C2H2-type zinc fingers lie at residues 460–482, 488–510, and 516–539; these read YSCV…ANVH, YPCH…EIWH, and YQCI…KSFH. Residues lysine 550, lysine 557, lysine 754, lysine 758, lysine 763, lysine 804, lysine 814, lysine 821, lysine 842, lysine 850, and lysine 857 each participate in a glycyl lysine isopeptide (Lys-Gly) (interchain with G-Cter in SUMO2) cross-link. The interval 745–804 is disordered; the sequence is SDPAVSQSLKDDSKPEPDKVGRFASRPKSIKEKKKTTSHTRGEIPEESNYVADPGGSLSK. A compositionally biased stretch (basic and acidic residues) spans 753–765; it reads LKDDSKPEPDKVG. Disordered regions lie at residues 871 to 891 and 903 to 922; these read QEEP…PLGL and FDDA…YYNY. Glycyl lysine isopeptide (Lys-Gly) (interchain with G-Cter in SUMO2) cross-links involve residues lysine 923, lysine 964, lysine 969, lysine 977, lysine 981, lysine 991, lysine 1017, and lysine 1026. C2H2-type zinc fingers lie at residues 1010-1032, 1038-1060, 1066-1088, 1094-1116, and 1125-1147; these read YACE…MRCH, YQCK…ERIH, FVCQ…ERIH, YHCQ…EQRH, and YACF…QKKH. Glycyl lysine isopeptide (Lys-Gly) (interchain with G-Cter in SUMO2) cross-links involve residues lysine 1109, lysine 1132, lysine 1135, lysine 1150, and lysine 1183.

As to quaternary structure, interacts with CBFA2T3. Interacts with ZBTB4. Interacts with RBBP6. Post-translationally, ubiquitinated by RBBP6; leading to its degradation by the proteasome.

It localises to the nucleus. Its subcellular location is the chromosome. Transcriptional regulator with bimodal DNA-binding specificity. Binds with a higher affinity to methylated CpG dinucleotides in the consensus sequence 5'-CGCG-3' but can also bind to E-box elements (5'-CACGTG-3'). Can also bind specifically to a single methyl-CpG pair. Represses transcription in a methyl-CpG-dependent manner. Plays an important role in regulating DNA replication and common fragile sites (CFS) stability in a RBBP6- and MCM10-dependent manner; represses expression of MCM10 which plays an important role in DNA-replication. Acts as a transcriptional activator. May be involved in the differentiation and/or survival of late postmitotic neurons. This is Zinc finger and BTB domain-containing protein 38 from Homo sapiens (Human).